A 277-amino-acid polypeptide reads, in one-letter code: MEMO1 family protein Tpet_0837 (277 aa).

Belongs to the MEMO1 family.

This Thermotoga petrophila (strain ATCC BAA-488 / DSM 13995 / JCM 10881 / RKU-1) protein is MEMO1 family protein Tpet_0837.